We begin with the raw amino-acid sequence, 228 residues long: Urease accessory protein UreF 1 (228 aa).

Belongs to the UreF family. As to quaternary structure, ureD, UreF and UreG form a complex that acts as a GTP-hydrolysis-dependent molecular chaperone, activating the urease apoprotein by helping to assemble the nickel containing metallocenter of UreC. The UreE protein probably delivers the nickel.

The protein localises to the cytoplasm. Functionally, required for maturation of urease via the functional incorporation of the urease nickel metallocenter. In terms of biological role, disruption of the ure1 gene cluster suggests that it protects brucellae during their passage through the stomach. The major route of infection in human brucellosis is oral. This Brucella abortus (strain 2308) protein is Urease accessory protein UreF 1.